We begin with the raw amino-acid sequence, 508 residues long: Protein NODULATION SIGNALING PATHWAY 2 (508 aa).

Positions 75 to 98 are disordered; sequence ITTTTTTTTTTDEEEEEMETTTTT. The region spanning 108-500 is the GRAS domain; it reads VGDDSKGLKL…RRLLSASLWT (393 aa). Residues 115-190 form a leucine repeat I (LRI) region; it reads LKLVHLLMAG…NNHHHHNNNK (76 aa). The interval 209–273 is VHIID; it reads FQLLQDMSPY…NNGPHLRITA (65 aa). Positions 240-244 match the VHIID motif; the sequence is VHVID. A leucine repeat II (LRII) region spans residues 289–321; the sequence is ETGRRLTSFAASLGQPFSFHHCRLDSDETFRPS. Residues 331 to 422 are PFYRE; the sequence is LVFNCMLNLP…RVFFGPRIAG (92 aa). Residues 425–500 form an SAW region; the sequence is GRIYRTGGEE…RRLLSASLWT (76 aa).

Belongs to the GRAS family. As to quaternary structure, interacts with RAM1. Interacts with IPN2 and RAD1. Expressed in roots, shoots and leaves.

The protein localises to the nucleus membrane. The protein resides in the endoplasmic reticulum. Functionally, transcriptional regulator essential for Nod-factor-induced gene expression. Acts downstream of calcium spiking and DMI3, a calcium/calmodulin-dependent protein kinase (CCaMK). Transcription factor involved in the control of strigolactone biosynthesis in roots through the activation of the beta-carotene isomerase D27, which participates in a pathway leading to biosynthesis of strigolactones. This chain is Protein NODULATION SIGNALING PATHWAY 2, found in Medicago truncatula (Barrel medic).